Consider the following 293-residue polypeptide: 4-diphosphocytidyl-2-C-methyl-D-erythritol kinase (293 aa).

Residue lysine 16 is part of the active site. 99-109 provides a ligand contact to ATP; the sequence is PMGAGLGGGSS. Aspartate 141 is an active-site residue.

The protein belongs to the GHMP kinase family. IspE subfamily.

It catalyses the reaction 4-CDP-2-C-methyl-D-erythritol + ATP = 4-CDP-2-C-methyl-D-erythritol 2-phosphate + ADP + H(+). Its pathway is isoprenoid biosynthesis; isopentenyl diphosphate biosynthesis via DXP pathway; isopentenyl diphosphate from 1-deoxy-D-xylulose 5-phosphate: step 3/6. Functionally, catalyzes the phosphorylation of the position 2 hydroxy group of 4-diphosphocytidyl-2C-methyl-D-erythritol. The polypeptide is 4-diphosphocytidyl-2-C-methyl-D-erythritol kinase (Burkholderia pseudomallei (strain 668)).